Reading from the N-terminus, the 387-residue chain is Cysteine desulfurase IscS (387 aa).

Pyridoxal 5'-phosphate is bound by residues 73–74, asparagine 155, glutamine 183, and 203–205; these read AT and SAH. Lysine 206 carries the N6-(pyridoxal phosphate)lysine modification. Threonine 241 provides a ligand contact to pyridoxal 5'-phosphate. Catalysis depends on cysteine 328, which acts as the Cysteine persulfide intermediate. Cysteine 328 is a [2Fe-2S] cluster binding site.

It belongs to the class-V pyridoxal-phosphate-dependent aminotransferase family. NifS/IscS subfamily. As to quaternary structure, homodimer. Forms a heterotetramer with IscU, interacts with other sulfur acceptors. Pyridoxal 5'-phosphate is required as a cofactor.

It localises to the cytoplasm. It carries out the reaction (sulfur carrier)-H + L-cysteine = (sulfur carrier)-SH + L-alanine. It functions in the pathway cofactor biosynthesis; iron-sulfur cluster biosynthesis. Master enzyme that delivers sulfur to a number of partners involved in Fe-S cluster assembly, tRNA modification or cofactor biosynthesis. Catalyzes the removal of elemental sulfur atoms from cysteine to produce alanine. Functions as a sulfur delivery protein for Fe-S cluster synthesis onto IscU, an Fe-S scaffold assembly protein, as well as other S acceptor proteins. The polypeptide is Cysteine desulfurase IscS (Helicobacter pylori (strain ATCC 700392 / 26695) (Campylobacter pylori)).